Consider the following 183-residue polypeptide: ATP-dependent protease subunit HslV (183 aa).

The active site involves Thr-7. Na(+)-binding residues include Gly-162, Cys-165, and Thr-168.

It belongs to the peptidase T1B family. HslV subfamily. As to quaternary structure, a double ring-shaped homohexamer of HslV is capped on each side by a ring-shaped HslU homohexamer. The assembly of the HslU/HslV complex is dependent on binding of ATP.

The protein localises to the cytoplasm. It catalyses the reaction ATP-dependent cleavage of peptide bonds with broad specificity.. Its activity is regulated as follows. Allosterically activated by HslU binding. In terms of biological role, protease subunit of a proteasome-like degradation complex believed to be a general protein degrading machinery. This is ATP-dependent protease subunit HslV from Chromobacterium violaceum (strain ATCC 12472 / DSM 30191 / JCM 1249 / CCUG 213 / NBRC 12614 / NCIMB 9131 / NCTC 9757 / MK).